The following is a 439-amino-acid chain: Maintenance of mitochondrial morphology protein 1 (439 aa).

Over 1–76 (MSQDLIETTA…NGNTWSFTQG (76 aa)) the chain is Lumenal. Residues 77–97 (LVIGQVSVIFIIIVFVKFFVF) traverse the membrane as a helical segment. The Cytoplasmic portion of the chain corresponds to 98-439 (ADSSSHIPTK…TPGEYVNSNI (342 aa)). 3 disordered regions span residues 125-145 (KHSNGQFANDGENEDDTSLDS), 309-336 (MNGYSKENANGDGASSSNNDEDEDDGGT), and 405-425 (REPVTKKTTTTPSTTVNGTSA). An SMP-LTD domain is found at 165–395 (ASESLDWFNV…EPRFQVVRLP (231 aa)). Low complexity-rich tracts occupy residues 315–326 (ENANGDGASSSN) and 410–424 (KKTTTTPSTTVNGTS).

It belongs to the MMM1 family. In terms of assembly, homodimer. Component of the ER-mitochondria encounter structure (ERMES) or MDM complex, composed of MMM1, MDM10, MDM12 and MDM34. An MMM1 homodimer associates with one molecule of MDM12 on each side in a pairwise head-to-tail manner, and the SMP-LTD domains of MMM1 and MDM12 generate a continuous hydrophobic tunnel for phospholipid trafficking.

It is found in the endoplasmic reticulum membrane. In terms of biological role, component of the ERMES/MDM complex, which serves as a molecular tether to connect the endoplasmic reticulum (ER) and mitochondria. Components of this complex are involved in the control of mitochondrial shape and protein biogenesis, and function in nonvesicular lipid trafficking between the ER and mitochondria. The MDM12-MMM1 subcomplex functions in the major beta-barrel assembly pathway that is responsible for biogenesis of all outer membrane beta-barrel proteins, and acts in a late step after the SAM complex. The MDM10-MDM12-MMM1 subcomplex further acts in the TOM40-specific pathway after the action of the MDM12-MMM1 complex. Essential for establishing and maintaining the structure of mitochondria and maintenance of mtDNA nucleoids. This Candida albicans (strain SC5314 / ATCC MYA-2876) (Yeast) protein is Maintenance of mitochondrial morphology protein 1.